Here is a 1140-residue protein sequence, read N- to C-terminus: Squamosa promoter-binding-like protein 15 (1140 aa).

2 disordered regions span residues 73–112 (RVNA…LNLQ) and 124–177 (DVSP…GGNS). Composition is skewed to low complexity over residues 76-100 (AGLS…EALR) and 125-135 (VSPAATTVSSS). Residues 164–177 (ASGGGGGGGGGGNS) are compositionally biased toward gly residues. The segment at 184-261 (YPMCQVDDCR…AGHNRRRRKT (78 aa)) adopts an SBP-type zinc-finger fold. Zn(2+)-binding residues include C187, C192, C209, H212, C228, C231, H235, and C247. A Bipartite nuclear localization signal motif is present at residues 244–260 (KRSCRRRLAGHNRRRRK). Disordered stretches follow at residues 327 to 382 (NNGN…ADGF), 403 to 472 (TSNP…TPPY), 496 to 517 (LSSE…PVTH), and 558 to 597 (KDSE…DGQD). A compositionally biased stretch (polar residues) spans 345 to 375 (ASHSQQQDSVQRTTNGFEKQTNGLDKQTNGF). A compositionally biased stretch (low complexity) spans 403–430 (TSNPDSNTSQSQGSSDSSGNNKSKSQST). Positions 450–466 (RKNDALERSPEMYKQPD) are enriched in basic and acidic residues. Polar residues predominate over residues 496–514 (LSSESSNPLDERSPSSSPP). Low complexity predominate over residues 579–593 (TSTSCSDHSPSTSNS).

As to expression, expressed in stems, leaf sheaths, and young panicles.

The protein localises to the nucleus. In terms of biological role, trans-acting factor that binds specifically to the consensus nucleotide sequence 5'-TNCGTACAA-3'. The protein is Squamosa promoter-binding-like protein 15 (SPL15) of Oryza sativa subsp. indica (Rice).